A 293-amino-acid polypeptide reads, in one-letter code: RNA-binding Raly-like protein (293 aa).

One can recognise an RRM domain in the interval 21–92 (SRVFIGNLNT…QPLDINMAGE (72 aa)). 2 disordered regions span residues 159–195 (PRAAVTTTRRGKGVFSMKGGSRSAVSGSSSSGSKLKS) and 245–293 (QDEC…LQIK). Over residues 176 to 192 (KGGSRSAVSGSSSSGSK) the composition is skewed to low complexity. Residues 192–254 (KLKSDELQTI…QDECVSENAD (63 aa)) adopt a coiled-coil conformation. A compositionally biased stretch (acidic residues) spans 259-284 (EPAEGAPDADGEELTDGVEEDFDEDG).

It belongs to the RRM HNRPC family. RALY subfamily.

The sequence is that of RNA-binding Raly-like protein (RALYL) from Bos taurus (Bovine).